A 166-amino-acid polypeptide reads, in one-letter code: Large ribosomal subunit protein uL10 (166 aa).

It belongs to the universal ribosomal protein uL10 family. In terms of assembly, part of the ribosomal stalk of the 50S ribosomal subunit. The N-terminus interacts with L11 and the large rRNA to form the base of the stalk. The C-terminus forms an elongated spine to which L12 dimers bind in a sequential fashion forming a multimeric L10(L12)X complex.

In terms of biological role, forms part of the ribosomal stalk, playing a central role in the interaction of the ribosome with GTP-bound translation factors. The chain is Large ribosomal subunit protein uL10 from Pseudomonas syringae pv. tomato (strain ATCC BAA-871 / DC3000).